A 206-amino-acid polypeptide reads, in one-letter code: Thymidylate kinase (206 aa).

11–18 (GIDGAGKT) lines the ATP pocket.

This sequence belongs to the thymidylate kinase family.

The catalysed reaction is dTMP + ATP = dTDP + ADP. In terms of biological role, phosphorylation of dTMP to form dTDP in both de novo and salvage pathways of dTTP synthesis. This chain is Thymidylate kinase, found in Paraburkholderia phytofirmans (strain DSM 17436 / LMG 22146 / PsJN) (Burkholderia phytofirmans).